Consider the following 90-residue polypeptide: uncharacterized protein (90 aa).

A signal peptide spans 1–20 (MAYKMLQVVLCSTLLIGALG).

This is an uncharacterized protein from Homo sapiens (Human).